The following is a 155-amino-acid chain: Large ribosomal subunit protein eL24 (155 aa).

The tract at residues 119–155 is disordered; sequence VKAAKKAAAPAPAKKSAPKQKAAKVTQKAAPRVGGKR. A compositionally biased stretch (low complexity) spans 124–133; sequence KAAAPAPAKK.

This sequence belongs to the eukaryotic ribosomal protein eL24 family.

The chain is Large ribosomal subunit protein eL24 (RpL24) from Drosophila melanogaster (Fruit fly).